Consider the following 30-residue polypeptide: U1-poneritoxin-Ni3b (30 aa).

It belongs to the ponericin-G family. In terms of tissue distribution, expressed by the venom gland.

The protein resides in the secreted. In terms of biological role, shows a broad spectrum of activity against both Gram-positive and Gram-negative bacteria. Also has antimicrobial activity against S.cerevisiae. Has insecticidal and non-hemolytic activity. This chain is U1-poneritoxin-Ni3b, found in Neoponera inversa (Ant).